Consider the following 219-residue polypeptide: uncharacterized protein (219 aa).

Residues 57–158 enclose the HD domain; it reads QLEHMTRAAM…LSEASRQTLL (102 aa).

This is an uncharacterized protein from Acanthamoeba polyphaga mimivirus (APMV).